An 801-amino-acid polypeptide reads, in one-letter code: Cation/H(+) antiporter 7 (801 aa).

13 consecutive transmembrane segments (helical) span residues 58-78, 83-103, 128-148, 154-174, 192-212, 223-243, 254-274, 287-307, 312-332, 340-360, 377-397, 407-427, and 438-458; these read PNLE…EILF, IPIP…LFSY, GAFG…VGML, RAAL…YILM, EIIL…LTDL, VQSC…GTVL, IVIV…MLWI, VYIY…LNFF, YGWF…SALI, VGVL…ISWL, AISV…ITAF, IVLA…LGYI, and FTIA…AIEF.

Belongs to the monovalent cation:proton antiporter 2 (CPA2) transporter (TC 2.A.37) family. CHX (TC 2.A.37.4) subfamily. Expressed in pollen.

Its subcellular location is the membrane. May operate as a cation/H(+) antiporter. This chain is Cation/H(+) antiporter 7 (CHX7), found in Arabidopsis thaliana (Mouse-ear cress).